Reading from the N-terminus, the 369-residue chain is Uroporphyrinogen decarboxylase (369 aa).

Residues 28-32 (RQAGR), Asp-78, Tyr-154, Ser-209, and His-339 each bind substrate.

The protein belongs to the uroporphyrinogen decarboxylase family. Homodimer.

The protein resides in the cytoplasm. The enzyme catalyses uroporphyrinogen III + 4 H(+) = coproporphyrinogen III + 4 CO2. It functions in the pathway porphyrin-containing compound metabolism; protoporphyrin-IX biosynthesis; coproporphyrinogen-III from 5-aminolevulinate: step 4/4. Catalyzes the decarboxylation of four acetate groups of uroporphyrinogen-III to yield coproporphyrinogen-III. This is Uroporphyrinogen decarboxylase from Polaromonas sp. (strain JS666 / ATCC BAA-500).